Reading from the N-terminus, the 1842-residue chain is Plexin-B2 (1842 aa).

The signal sequence occupies residues 1-19 (MALPLWALTFLGLTGLGLS). A Sema domain is found at 20–468 (LRSRKPESFR…TQDKVFRLPV (449 aa)). Residues 20-1201 (LRSRKPESFR…EYDTRASDVP (1182 aa)) are Extracellular-facing. Cystine bridges form between Cys78/Cys87 and Cys112/Cys120. 2 N-linked (GlcNAc...) asparagine glycosylation sites follow: Asn127 and Asn242. 3 disulfides stabilise this stretch: Cys250–Cys366, Cys266–Cys313, and Cys331–Cys353. N-linked (GlcNAc...) asparagine glycans are attached at residues Asn393 and Asn451. Cystine bridges form between Cys471-Cys488, Cys477-Cys520, Cys480-Cys497, Cys491-Cys503, and Cys557-Cys576. N-linked (GlcNAc...) asparagine glycosylation is present at Asn798. IPT/TIG domains follow at residues 806-895 (PVIT…QFTY), 898-982 (PQPL…SFTY), and 986-1095 (PMIR…VFEY). Asn919, Asn1053, and Asn1072 each carry an N-linked (GlcNAc...) asparagine glycan. The chain crosses the membrane as a helical span at residues 1202 to 1222 (LSLILPLVMVPMVFIIVVSIY). Over 1223-1842 (CYWRKSQQAE…AALENKVTDL (620 aa)) the chain is Cytoplasmic. A phosphoserine mark is found at Ser1240, Ser1248, and Ser1574.

The protein belongs to the plexin family. As to quaternary structure, monomer, and heterodimer with PLXNB1. Interacts with MET, ARHGEF11 and ARHGEF12. May also interact with MST1R. In terms of tissue distribution, detected in macrophages from spleen and bone marrow (at protein level). Detected in granule cells in the developing cerebellum, dentate gyrus and olfactory bulb. Expressed in neurons and glia in the developing hippocampus.

It localises to the cell membrane. In terms of biological role, cell surface receptor for SEMA4C, SEMA4D and SEMA4G that plays an important role in cell-cell signaling. Plays a role in glutamatergic synapse development and is required for SEMA4A-mediated excitatory synapse development. Binding to class 4 semaphorins promotes downstream activation of RHOA and phosphorylation of ERBB2 at 'Tyr-1248'. Also acts as a cell surface receptor for angiogenin (ANG); promoting ANG endocytosis and translocation to the cytoplasm or nucleus. Required for normal differentiation and migration of neuronal cells during brain corticogenesis and for normal embryonic brain development. Regulates the migration of cerebellar granule cells in the developing brain. Plays a role in RHOA activation and subsequent changes of the actin cytoskeleton. Plays a role in axon guidance, invasive growth and cell migration. May modulate the activity of RAC1 and CDC42. Down-regulates macrophage migration in wound-healing assays (in vitro). The protein is Plexin-B2 of Mus musculus (Mouse).